Reading from the N-terminus, the 262-residue chain is Acyl-[acyl-carrier-protein]--UDP-N-acetylglucosamine O-acyltransferase (262 aa).

It belongs to the transferase hexapeptide repeat family. LpxA subfamily. In terms of assembly, homotrimer.

Its subcellular location is the cytoplasm. It catalyses the reaction a (3R)-hydroxyacyl-[ACP] + UDP-N-acetyl-alpha-D-glucosamine = a UDP-3-O-[(3R)-3-hydroxyacyl]-N-acetyl-alpha-D-glucosamine + holo-[ACP]. Its pathway is glycolipid biosynthesis; lipid IV(A) biosynthesis; lipid IV(A) from (3R)-3-hydroxytetradecanoyl-[acyl-carrier-protein] and UDP-N-acetyl-alpha-D-glucosamine: step 1/6. In terms of biological role, involved in the biosynthesis of lipid A, a phosphorylated glycolipid that anchors the lipopolysaccharide to the outer membrane of the cell. The chain is Acyl-[acyl-carrier-protein]--UDP-N-acetylglucosamine O-acyltransferase from Herminiimonas arsenicoxydans.